Consider the following 673-residue polypeptide: UvrABC system protein B (673 aa).

The region spanning 26-183 (EGLEDGLAHQ…RRLAELQYTR (158 aa)) is the Helicase ATP-binding domain. 39-46 (GVTGSGKT) serves as a coordination point for ATP. The Beta-hairpin signature appears at 92-115 (YYDYYQPEAYVPSSDTFIEKDASV). The region spanning 431–597 (QVDDLLSEIR…GLNKKVVDIL (167 aa)) is the Helicase C-terminal domain. The segment at 608-627 (AKGRGKSRPIVEPDNVPMDM) is disordered. Positions 633–668 (QQKIHELEGLMMQHAQNLEFEEAAQIRDQLHQLREL) constitute a UVR domain.

Belongs to the UvrB family. Forms a heterotetramer with UvrA during the search for lesions. Interacts with UvrC in an incision complex.

It is found in the cytoplasm. Its function is as follows. The UvrABC repair system catalyzes the recognition and processing of DNA lesions. A damage recognition complex composed of 2 UvrA and 2 UvrB subunits scans DNA for abnormalities. Upon binding of the UvrA(2)B(2) complex to a putative damaged site, the DNA wraps around one UvrB monomer. DNA wrap is dependent on ATP binding by UvrB and probably causes local melting of the DNA helix, facilitating insertion of UvrB beta-hairpin between the DNA strands. Then UvrB probes one DNA strand for the presence of a lesion. If a lesion is found the UvrA subunits dissociate and the UvrB-DNA preincision complex is formed. This complex is subsequently bound by UvrC and the second UvrB is released. If no lesion is found, the DNA wraps around the other UvrB subunit that will check the other stand for damage. This is UvrABC system protein B from Escherichia fergusonii (strain ATCC 35469 / DSM 13698 / CCUG 18766 / IAM 14443 / JCM 21226 / LMG 7866 / NBRC 102419 / NCTC 12128 / CDC 0568-73).